The following is a 479-amino-acid chain: Glycogen synthase (479 aa).

K15 contributes to the ADP-alpha-D-glucose binding site.

This sequence belongs to the glycosyltransferase 1 family. Bacterial/plant glycogen synthase subfamily.

It carries out the reaction [(1-&gt;4)-alpha-D-glucosyl](n) + ADP-alpha-D-glucose = [(1-&gt;4)-alpha-D-glucosyl](n+1) + ADP + H(+). Its pathway is glycan biosynthesis; glycogen biosynthesis. Synthesizes alpha-1,4-glucan chains using ADP-glucose. In Roseobacter denitrificans (strain ATCC 33942 / OCh 114) (Erythrobacter sp. (strain OCh 114)), this protein is Glycogen synthase.